We begin with the raw amino-acid sequence, 228 residues long: Translin (228 aa).

The DNA/RNA binding stretch occupies residues 86 to 90 (RFHEH). The leucine-zipper stretch occupies residues 177–198 (LDSGFRLLNLKNDSLRKRYDGL). At lysine 187 the chain carries N6-acetyllysine. Position 190 is a phosphoserine (serine 190). Lysine 199 carries the post-translational modification N6-acetyllysine.

Belongs to the translin family. As to quaternary structure, ring-shaped heterooctamer of six TSN and two TSNAX subunits, DNA/RNA binding occurs inside the ring.

It localises to the cytoplasm. The protein localises to the nucleus. DNA-binding protein that specifically recognizes consensus sequences at the breakpoint junctions in chromosomal translocations, mostly involving immunoglobulin (Ig)/T-cell receptor gene segments. Seems to recognize single-stranded DNA ends generated by staggered breaks occurring at recombination hot spots. Functionally, exhibits both single-stranded and double-stranded endoribonuclease activity. May act as an activator of RNA-induced silencing complex (RISC) by facilitating endonucleolytic cleavage of the siRNA passenger strand. This is Translin (Tsn) from Mus musculus (Mouse).